The primary structure comprises 1182 residues: CRISPR-associated endoribonuclease Cas13a (1182 aa).

A coiled-coil region spans residues 132-279 (FNNLIEKVQN…ENNSDNKLKQ (148 aa)). The interval 366 to 508 (YIKNTGQLET…NNEEIKGYFI (143 aa)) is HEPN-like fold 1. A coiled-coil region spans residues 896 to 955 (KVEKENIEDYNKKEEIEQKKKSNIEKLQDLKVELHKKWEQNKITEKEIEKYNNTTRKINE). An HEPN-like fold 2 region spans residues 965 to 1120 (LQNVYLLHEM…QNHILKSTKT (156 aa)).

This sequence belongs to the CRISPR-associated endoribonuclease Cas13a family. The cofactor is a divalent metal cation.

Its activity is regulated as follows. Target RNA acts as an activator for non-specific ssRNA degradation. Its function is as follows. CRISPR (clustered regularly interspaced short palindromic repeat), is an adaptive immune system that provides protection against mobile genetic elements (viruses, transposable elements and conjugative plasmids). CRISPR clusters contain sequences complementary to antecedent mobile elements and target invading nucleic acids. Unlike many single-component effectors, this CRISPR-Cas system targets RNA. CRISPR clusters are transcribed from pre-CRISPR RNA (crRNA) and processed into crRNA by this protein. Cleaves linear target ssRNA in a pre-crRNA-dependent fashion, preferentially before U residues. Binding a viable target RNA target activates this protein for non-specific RNA degradation in vitro (called collateral RNA degradation), which is fairly sensitive as it requires picomolar levels of viable target RNA. This is CRISPR-associated endoribonuclease Cas13a from Leptotrichia wadei (strain F0279).